Consider the following 233-residue polypeptide: MEIFITGLLLGASLLLSIGPQNVLVIKQGIKREGLIAVLLVCLISDVFLFIAGTLGVDLLSNAAPIVLDIMRWGGIAYLLWFAVMAAKDAMTNKVEAPQIIEETEPTVPDDTPLGGSAVATDTRNRVRVEVSVDKQRVWVKPMLMAIVLTWLNPNAYLDAFVFIGGVGAQYGDTGRWIFAAGAFAASLIWFPLVGFGAAALSRPLSSPKVWRWINVVVAVVMTALAIKLMLMG.

Residues 1-2 (ME) lie on the Cytoplasmic side of the membrane. A helical membrane pass occupies residues 3–23 (IFITGLLLGASLLLSIGPQNV). Topologically, residues 24–65 (LVIKQGIKREGLIAVLLVCLISDVFLFIAGTLGVDLLSNAAP) are periplasmic. Residues 66–86 (IVLDIMRWGGIAYLLWFAVMA) traverse the membrane as a helical segment. Residues 87-143 (AKDAMTNKVEAPQIIEETEPTVPDDTPLGGSAVATDTRNRVRVEVSVDKQRVWVKPM) lie on the Cytoplasmic side of the membrane. The helical transmembrane segment at 144–164 (LMAIVLTWLNPNAYLDAFVFI) threads the bilayer. The Periplasmic segment spans residues 165-176 (GGVGAQYGDTGR). Residues 177–197 (WIFAAGAFAASLIWFPLVGFG) form a helical membrane-spanning segment. The Cytoplasmic portion of the chain corresponds to 198 to 212 (AAALSRPLSSPKVWR). The chain crosses the membrane as a helical span at residues 213–233 (WINVVVAVVMTALAIKLMLMG).

The protein belongs to the LysE/ArgO transporter (TC 2.A.75) family.

Its subcellular location is the cell inner membrane. With respect to regulation, transport process is modulated by three forces: the membrane potential, the chemical potential of lysine, and the proton gradient. Strongly inhibited by CCCP and valinomycin. Its function is as follows. Catalyzes the efflux of L-lysine. Can also export L-arginine and L-citrulline. The lysEG system prevents bacteriostasis due to elevated L-lysine or L-arginine concentrations that arise during growth in the presence of peptides or in mutants possessing a deregulated biosynthesis pathway. In vitro, can also export D-lysine during biotechnological production of D-amino acids. The polypeptide is Lysine exporter LysE (Corynebacterium glutamicum (strain ATCC 13032 / DSM 20300 / JCM 1318 / BCRC 11384 / CCUG 27702 / LMG 3730 / NBRC 12168 / NCIMB 10025 / NRRL B-2784 / 534)).